Here is a 143-residue protein sequence, read N- to C-terminus: Mini-ribonuclease 3 (143 aa).

Residue aspartate 35 is part of the active site.

The protein belongs to the MrnC RNase family. As to quaternary structure, homodimer. Mg(2+) is required as a cofactor.

The protein localises to the cytoplasm. Functionally, involved in correct processing of both the 5' and 3' ends of 23S rRNA precursor. Processes 30S rRNA precursor transcript even in absence of ribonuclease 3 (Rnc); Rnc processes 30S rRNA into smaller rRNA precursors. This chain is Mini-ribonuclease 3, found in Synechocystis sp. (strain ATCC 27184 / PCC 6803 / Kazusa).